Reading from the N-terminus, the 329-residue chain is 4-hydroxythreonine-4-phosphate dehydrogenase (329 aa).

Positions 136 and 137 each coordinate substrate. The a divalent metal cation site is built by His-166, His-211, and His-266. Substrate-binding residues include Lys-274, Asn-283, and Arg-292.

This sequence belongs to the PdxA family. In terms of assembly, homodimer. Requires Zn(2+) as cofactor. Mg(2+) serves as cofactor. Co(2+) is required as a cofactor.

Its subcellular location is the cytoplasm. The enzyme catalyses 4-(phosphooxy)-L-threonine + NAD(+) = 3-amino-2-oxopropyl phosphate + CO2 + NADH. Its pathway is cofactor biosynthesis; pyridoxine 5'-phosphate biosynthesis; pyridoxine 5'-phosphate from D-erythrose 4-phosphate: step 4/5. Its function is as follows. Catalyzes the NAD(P)-dependent oxidation of 4-(phosphooxy)-L-threonine (HTP) into 2-amino-3-oxo-4-(phosphooxy)butyric acid which spontaneously decarboxylates to form 3-amino-2-oxopropyl phosphate (AHAP). The polypeptide is 4-hydroxythreonine-4-phosphate dehydrogenase (Shigella boydii serotype 18 (strain CDC 3083-94 / BS512)).